The primary structure comprises 859 residues: Envelope glycoprotein gp160 (859 aa).

A signal peptide spans 1–24 (MERGRNQLLIAILLASACLIYCRQ). The Extracellular segment spans residues 25-680 (QYVTVFYGVP…LTSWISYIQY (656 aa)). Asn38 carries N-linked (GlcNAc...) asparagine; by host glycosylation. Cysteines 45 and 58 form a disulfide. 22 N-linked (GlcNAc...) asparagine; by host glycosylation sites follow: Asn71, Asn115, Asn148, Asn163, Asn176, Asn188, Asn195, Asn205, Asn237, Asn247, Asn271, Asn277, Asn288, Asn299, Asn309, Asn343, Asn366, Asn398, Asn411, Asn448, Asn463, and Asn467. 5 disulfides stabilise this stretch: Cys102/Cys213, Cys109/Cys204, Cys114/Cys160, Cys226/Cys256, and Cys236/Cys248. Residues 114-159 (CNISTSDTTMIRTTTPSTAKEAPISDNSPCIRTNNCSGLEEEKIVK) form a V1 region. A V2 region spans residues 160-204 (CHFNMTGLERDKKKQYNETWYSSDVVCDNSTDQTTNETTCYMNHC). The interval 304 to 337 (CRRPGNKTVVPITLMSGQRFHSRPIINKRPRQAW) is V3. Cysteines 304 and 338 form a disulfide. Intrachain disulfides connect Cys390/Cys447 and Cys397/Cys420. The segment at 397 to 420 (CNMTWFLNWVENKPNTTKRNYAPC) is V4. Residues 463–470 (NQTTNITF) are V5. The tract at residues 513 to 533 (GAFVLGFLGFLTTAGVAMGTA) is fusion peptide. Residues 576-592 (LQARVTAIEKYLKDQAQ) form an immunosuppression region. N-linked (GlcNAc...) asparagine; by host glycans are attached at residues Asn612, Asn621, and Asn637. A coiled-coil region spans residues 625 to 646 (QEWEQKVRYLEANISQSLEEAQ). The segment at 658–679 (KLNNWDVFTNWFDLTSWISYIQ) is MPER; binding to GalCer. A helical membrane pass occupies residues 681–701 (GVYIVVGIIVLRIVIYVVQML). Residues 702–859 (SRLRKGYRPV…IRQGAELALL (158 aa)) lie on the Cytoplasmic side of the membrane. The YXXV motif; contains endocytosis signal signature appears at 708-711 (YRPV). The tract at residues 726–745 (KDPEQPASEETEEDVGGNGG) is disordered. Cys774 carries S-palmitoyl cysteine; by host lipidation. The Di-leucine internalization motif signature appears at 858–859 (LL).

In terms of assembly, the mature envelope protein (Env) consists of a homotrimer of non-covalently associated gp120-gp41 heterodimers. The resulting complex protrudes from the virus surface as a spike. There seems to be as few as 10 spikes on the average virion. Interacts with human CD4, CCR5 and CXCR4, to form a P4HB/PDI-CD4-CXCR4-gp120 complex. Gp120 also interacts with the C-type lectins CD209/DC-SIGN and CLEC4M/DC-SIGNR (collectively referred to as DC-SIGN(R)). Gp120 and gp41 interact with GalCer. As to quaternary structure, the mature envelope protein (Env) consists of a homotrimer of non-covalently associated gp120-gp41 heterodimers. The resulting complex protrudes from the virus surface as a spike. There seems to be as few as 10 spikes on the average virion. Post-translationally, specific enzymatic cleavages in vivo yield mature proteins. Envelope glycoproteins are synthesized as an inactive precursor that is heavily N-glycosylated and processed likely by host cell furin in the Golgi to yield the mature SU and TM proteins. The cleavage site between SU and TM requires the minimal sequence [KR]-X-[KR]-R. Palmitoylation of the transmembrane protein and of Env polyprotein (prior to its proteolytic cleavage) is essential for their association with host cell membrane lipid rafts. Palmitoylation is therefore required for envelope trafficking to classical lipid rafts, but not for viral replication.

It is found in the virion membrane. It localises to the host cell membrane. The protein localises to the host endosome membrane. In terms of biological role, the surface protein gp120 (SU) attaches the virus to the host lymphoid cell by binding to the primary receptor CD4. This interaction induces a structural rearrangement creating a high affinity binding site for a chemokine coreceptor like CXCR4 and/or CCR5. This peculiar 2 stage receptor-interaction strategy allows gp120 to maintain the highly conserved coreceptor-binding site in a cryptic conformation, protected from neutralizing antibodies. Since CD4 also displays a binding site for the disulfide-isomerase P4HB/PDI, a P4HB/PDI-CD4-CXCR4-gp120 complex may form. In that complex, P4HB/PDI could reach and reduce gp120 disulfide bonds, causing major conformational changes in gp120. TXN, another PDI family member could also be involved in disulfide rearrangements in Env during fusion. These changes are transmitted to the transmembrane protein gp41 and are thought to activate its fusogenic potential by unmasking its fusion peptide. Functionally, the surface protein gp120 is a ligand for CD209/DC-SIGN and CLEC4M/DC-SIGNR, which are respectively found on dendritic cells (DCs), and on endothelial cells of liver sinusoids and lymph node sinuses. These interactions allow capture of viral particles at mucosal surfaces by these cells and subsequent transmission to permissive cells. DCs are professional antigen presenting cells, critical for host immunity by inducing specific immune responses against a broad variety of pathogens. They act as sentinels in various tissues where they take up antigen, process it, and present it to T-cells following migration to lymphoid organs. HIV subverts the migration properties of dendritic cells to gain access to CD4+ T-cells in lymph nodes. Virus transmission to permissive T-cells occurs either in trans (without DCs infection, through viral capture and transmission), or in cis (following DCs productive infection, through the usual CD4-gp120 interaction), thereby inducing a robust infection. In trans infection, bound virions remain infectious over days and it is proposed that they are not degraded, but protected in non-lysosomal acidic organelles within the DCs close to the cell membrane thus contributing to the viral infectious potential during DCs' migration from the periphery to the lymphoid tissues. On arrival at lymphoid tissues, intact virions recycle back to DCs' cell surface allowing virus transmission to CD4+ T-cells. Virion capture also seems to lead to MHC-II-restricted viral antigen presentation, and probably to the activation of HIV-specific CD4+ cells. The transmembrane protein gp41 (TM) acts as a class I viral fusion protein. Under the current model, the protein has at least 3 conformational states: pre-fusion native state, pre-hairpin intermediate state, and post-fusion hairpin state. During fusion of viral and target intracellular membranes, the coiled coil regions (heptad repeats) assume a trimer-of-hairpins structure, positioning the fusion peptide in close proximity to the C-terminal region of the ectodomain. The formation of this structure appears to drive apposition and subsequent fusion of viral and target cell membranes. Complete fusion occurs in host cell endosomes and is dynamin-dependent, however some lipid transfer might occur at the plasma membrane. The virus undergoes clathrin-dependent internalization long before endosomal fusion, thus minimizing the surface exposure of conserved viral epitopes during fusion and reducing the efficacy of inhibitors targeting these epitopes. Membranes fusion leads to delivery of the nucleocapsid into the cytoplasm. Its function is as follows. The envelope glycoprotein gp160 precursor down-modulates cell surface CD4 antigen by interacting with it in the endoplasmic reticulum and blocking its transport to the cell surface. In terms of biological role, the gp120-gp41 heterodimer seems to contribute to T-cell depletion during HIV-1 infection. The envelope glycoproteins expressed on the surface of infected cells induce apoptosis through an interaction with uninfected cells expressing the receptor (CD4) and the coreceptors CXCR4 or CCR5. This type of bystander killing may be obtained by at least three distinct mechanisms. First, the interaction between the 2 cells can induce cellular fusion followed by nuclear fusion within the syncytium. Syncytia are condemned to die from apoptosis. Second, the 2 interacting cells may not fuse entirely and simply exchange plasma membrane lipids, after a sort of hemifusion process, followed by rapid death. Third, it is possible that virus-infected cells, on the point of undergoing apoptosis, fuse with CD4-expressing cells, in which case apoptosis is rapidly transmitted from one cell to the other and thus occurs in a sort of contagious fashion. Functionally, the gp120-gp41 heterodimer allows rapid transcytosis of the virus through CD4 negative cells such as simple epithelial monolayers of the intestinal, rectal and endocervical epithelial barriers. Both gp120 and gp41 specifically recognize glycosphingolipids galactosyl-ceramide (GalCer) or 3' sulfo-galactosyl-ceramide (GalS) present in the lipid rafts structures of epithelial cells. Binding to these alternative receptors allows the rapid transcytosis of the virus through the epithelial cells. This transcytotic vesicle-mediated transport of virions from the apical side to the basolateral side of the epithelial cells does not involve infection of the cells themselves. This is Envelope glycoprotein gp160 (env) from Human immunodeficiency virus type 2 subtype A (isolate CAM2) (HIV-2).